The sequence spans 114 residues: Protein vCCL3 (114 aa).

Residues 1 to 26 (MWSMCWVLRAHLGLLFWVAVIELCAA) form the signal peptide.

Acts as a highly selective agonist for human lymphoactin receptor XCR1. This chain is Protein vCCL3 (K4.1), found in Human herpesvirus 8 type P (isolate GK18) (HHV-8).